Reading from the N-terminus, the 501-residue chain is ATP synthase subunit alpha (501 aa).

ATP is bound at residue 169–176; it reads GDRQTGKT.

The protein belongs to the ATPase alpha/beta chains family. F-type ATPases have 2 components, CF(1) - the catalytic core - and CF(0) - the membrane proton channel. CF(1) has five subunits: alpha(3), beta(3), gamma(1), delta(1), epsilon(1). CF(0) has three main subunits: a(1), b(2) and c(9-12). The alpha and beta chains form an alternating ring which encloses part of the gamma chain. CF(1) is attached to CF(0) by a central stalk formed by the gamma and epsilon chains, while a peripheral stalk is formed by the delta and b chains.

Its subcellular location is the cell inner membrane. The catalysed reaction is ATP + H2O + 4 H(+)(in) = ADP + phosphate + 5 H(+)(out). Produces ATP from ADP in the presence of a proton gradient across the membrane. The alpha chain is a regulatory subunit. The protein is ATP synthase subunit alpha of Campylobacter jejuni subsp. jejuni serotype O:6 (strain 81116 / NCTC 11828).